The following is a 415-amino-acid chain: Histidine--tRNA ligase (415 aa).

Belongs to the class-II aminoacyl-tRNA synthetase family. Homodimer.

Its subcellular location is the cytoplasm. It carries out the reaction tRNA(His) + L-histidine + ATP = L-histidyl-tRNA(His) + AMP + diphosphate + H(+). The sequence is that of Histidine--tRNA ligase from Rickettsia canadensis (strain McKiel).